A 385-amino-acid polypeptide reads, in one-letter code: 1-deoxy-D-xylulose 5-phosphate reductoisomerase (385 aa).

Residues serine 10, glycine 11, serine 12, isoleucine 13, glycine 36, asparagine 38, and asparagine 124 each contribute to the NADPH site. Lysine 125 contributes to the 1-deoxy-D-xylulose 5-phosphate binding site. An NADPH-binding site is contributed by glutamate 126. Residue aspartate 150 participates in Mn(2+) binding. Serine 151, glutamate 152, serine 176, and histidine 198 together coordinate 1-deoxy-D-xylulose 5-phosphate. Glutamate 152 serves as a coordination point for Mn(2+). Glycine 204 lines the NADPH pocket. Serine 211, asparagine 216, lysine 217, and glutamate 220 together coordinate 1-deoxy-D-xylulose 5-phosphate. Position 220 (glutamate 220) interacts with Mn(2+).

It belongs to the DXR family. The cofactor is Mg(2+). Mn(2+) is required as a cofactor.

It carries out the reaction 2-C-methyl-D-erythritol 4-phosphate + NADP(+) = 1-deoxy-D-xylulose 5-phosphate + NADPH + H(+). The protein operates within isoprenoid biosynthesis; isopentenyl diphosphate biosynthesis via DXP pathway; isopentenyl diphosphate from 1-deoxy-D-xylulose 5-phosphate: step 1/6. In terms of biological role, catalyzes the NADPH-dependent rearrangement and reduction of 1-deoxy-D-xylulose-5-phosphate (DXP) to 2-C-methyl-D-erythritol 4-phosphate (MEP). The sequence is that of 1-deoxy-D-xylulose 5-phosphate reductoisomerase from Endomicrobium trichonymphae.